A 195-amino-acid chain; its full sequence is dTTP/UTP pyrophosphatase (195 aa).

Aspartate 70 serves as the catalytic Proton acceptor.

This sequence belongs to the Maf family. YhdE subfamily. Requires a divalent metal cation as cofactor.

The protein localises to the cytoplasm. The catalysed reaction is dTTP + H2O = dTMP + diphosphate + H(+). It catalyses the reaction UTP + H2O = UMP + diphosphate + H(+). Functionally, nucleoside triphosphate pyrophosphatase that hydrolyzes dTTP and UTP. May have a dual role in cell division arrest and in preventing the incorporation of modified nucleotides into cellular nucleic acids. This chain is dTTP/UTP pyrophosphatase, found in Methanococcoides burtonii (strain DSM 6242 / NBRC 107633 / OCM 468 / ACE-M).